Consider the following 321-residue polypeptide: Glucan 1,3-beta-glucosidase (321 aa).

The N-terminal stretch at 1-21 (MQFLSSFVFAALALLPLSAMA) is a signal peptide. N39 and N99 each carry an N-linked (GlcNAc...) asparagine glycan. E141 functions as the Proton donor in the catalytic mechanism. N-linked (GlcNAc...) asparagine glycans are attached at residues N210, N213, and N237. E244 serves as the catalytic Nucleophile. 2 N-linked (GlcNAc...) asparagine glycosylation sites follow: N309 and N317.

The protein belongs to the glycosyl hydrolase 17 family.

The protein localises to the secreted. It localises to the cell wall. It carries out the reaction Successive hydrolysis of beta-D-glucose units from the non-reducing ends of (1-&gt;3)-beta-D-glucans, releasing alpha-glucose.. Its function is as follows. Glucanases possibly play a role in cell expansion during growth, in cell-cell fusion during mating, and in spore release during sporulation. This enzyme may be involved in beta-glucan degradation and also function biosynthetically as a transglycosylase. In Schizosaccharomyces pombe (strain 972 / ATCC 24843) (Fission yeast), this protein is Glucan 1,3-beta-glucosidase (bgl2).